The chain runs to 628 residues: Biosynthetic arginine decarboxylase (628 aa).

Lys99 is subject to N6-(pyridoxal phosphate)lysine. 279 to 289 serves as a coordination point for substrate; it reads VDVGGGLGIDY.

Belongs to the Orn/Lys/Arg decarboxylase class-II family. SpeA subfamily. The cofactor is Mg(2+). Requires pyridoxal 5'-phosphate as cofactor.

The catalysed reaction is L-arginine + H(+) = agmatine + CO2. The protein operates within amine and polyamine biosynthesis; agmatine biosynthesis; agmatine from L-arginine: step 1/1. Catalyzes the biosynthesis of agmatine from arginine. This Xylella fastidiosa (strain M23) protein is Biosynthetic arginine decarboxylase.